Reading from the N-terminus, the 135-residue chain is MVSRDFDRDKRLLTARQFSAVFDSPIGKVPGKHVLLLARENGLDHPRLGLVIGKKNVKLAVQRNRLKRLIRESFRHNQETLAGWDIVVIARKGLGELENPELHQQFGKLWKRLLRNRPRTESPADAPGVADGTHA.

The protein belongs to the RnpA family. In terms of assembly, consists of a catalytic RNA component (M1 or rnpB) and a protein subunit.

It catalyses the reaction Endonucleolytic cleavage of RNA, removing 5'-extranucleotides from tRNA precursor.. In terms of biological role, RNaseP catalyzes the removal of the 5'-leader sequence from pre-tRNA to produce the mature 5'-terminus. It can also cleave other RNA substrates such as 4.5S RNA. The protein component plays an auxiliary but essential role in vivo by binding to the 5'-leader sequence and broadening the substrate specificity of the ribozyme. The protein is Ribonuclease P protein component of Pseudomonas aeruginosa (strain LESB58).